The following is a 102-amino-acid chain: NADH-quinone oxidoreductase subunit K (102 aa).

Helical transmembrane passes span 6-26 (LEHG…GLMV), 30-50 (ILFV…AFVV), and 62-82 (VMFI…LAIL).

Belongs to the complex I subunit 4L family. In terms of assembly, NDH-1 is composed of 13 different subunits. Subunits NuoA, H, J, K, L, M, N constitute the membrane sector of the complex.

The protein localises to the cell inner membrane. It carries out the reaction a quinone + NADH + 5 H(+)(in) = a quinol + NAD(+) + 4 H(+)(out). Functionally, NDH-1 shuttles electrons from NADH, via FMN and iron-sulfur (Fe-S) centers, to quinones in the respiratory chain. The immediate electron acceptor for the enzyme in this species is believed to be ubiquinone. Couples the redox reaction to proton translocation (for every two electrons transferred, four hydrogen ions are translocated across the cytoplasmic membrane), and thus conserves the redox energy in a proton gradient. The sequence is that of NADH-quinone oxidoreductase subunit K from Pseudomonas syringae pv. tomato (strain ATCC BAA-871 / DC3000).